The primary structure comprises 431 residues: Serine--tRNA ligase (431 aa).

235–237 (TAE) lines the L-serine pocket. Residues 266–268 (RRE) and Val-282 contribute to the ATP site. Glu-289 contacts L-serine. 353–356 (EASS) serves as a coordination point for ATP. Ser-389 contributes to the L-serine binding site.

The protein belongs to the class-II aminoacyl-tRNA synthetase family. Type-1 seryl-tRNA synthetase subfamily. In terms of assembly, homodimer. The tRNA molecule binds across the dimer.

Its subcellular location is the cytoplasm. The catalysed reaction is tRNA(Ser) + L-serine + ATP = L-seryl-tRNA(Ser) + AMP + diphosphate + H(+). It carries out the reaction tRNA(Sec) + L-serine + ATP = L-seryl-tRNA(Sec) + AMP + diphosphate + H(+). It functions in the pathway aminoacyl-tRNA biosynthesis; selenocysteinyl-tRNA(Sec) biosynthesis; L-seryl-tRNA(Sec) from L-serine and tRNA(Sec): step 1/1. Catalyzes the attachment of serine to tRNA(Ser). Is also able to aminoacylate tRNA(Sec) with serine, to form the misacylated tRNA L-seryl-tRNA(Sec), which will be further converted into selenocysteinyl-tRNA(Sec). The protein is Serine--tRNA ligase of Prosthecochloris aestuarii (strain DSM 271 / SK 413).